Here is a 287-residue protein sequence, read N- to C-terminus: Large ribosomal subunit protein uL2 (287 aa).

Positions 221 to 287 (RGSVMNPCDH…SKRSRGGRDS (67 aa)) are disordered. Basic residues predominate over residues 258 to 287 (KTRKRNKPSNRFVLRKRRRTSKRSRGGRDS).

Belongs to the universal ribosomal protein uL2 family. As to quaternary structure, part of the 50S ribosomal subunit. Forms a bridge to the 30S subunit in the 70S ribosome.

Its function is as follows. One of the primary rRNA binding proteins. Required for association of the 30S and 50S subunits to form the 70S ribosome, for tRNA binding and peptide bond formation. It has been suggested to have peptidyltransferase activity; this is somewhat controversial. Makes several contacts with the 16S rRNA in the 70S ribosome. The polypeptide is Large ribosomal subunit protein uL2 (Prochlorococcus marinus (strain MIT 9313)).